Reading from the N-terminus, the 129-residue chain is uncharacterized protein (129 aa).

Residues 85–108 (SSAADSDDSSSCSECDSDALLSDD) show a composition bias toward low complexity. Residues 85–110 (SSAADSDDSSSCSECDSDALLSDDGP) form a disordered region.

This is an uncharacterized protein from Microplitis demolitor (Parasitoid wasp).